The chain runs to 795 residues: Phenylalanine--tRNA ligase beta subunit (795 aa).

One can recognise a tRNA-binding domain in the interval 39–148 (AGSFHGVVVG…ADAPIGTDIR (110 aa)). The B5 domain maps to 401 to 476 (PKRATITLRR…RVYGYNNIPD (76 aa)). The Mg(2+) site is built by Asp-454, Asp-460, Glu-463, and Glu-464. One can recognise an FDX-ACB domain in the interval 701 to 794 (SRFPANRRDI…LKERFQASLR (94 aa)).

Belongs to the phenylalanyl-tRNA synthetase beta subunit family. Type 1 subfamily. Tetramer of two alpha and two beta subunits. It depends on Mg(2+) as a cofactor.

The protein resides in the cytoplasm. It catalyses the reaction tRNA(Phe) + L-phenylalanine + ATP = L-phenylalanyl-tRNA(Phe) + AMP + diphosphate + H(+). The sequence is that of Phenylalanine--tRNA ligase beta subunit from Escherichia coli O157:H7.